The following is a 308-amino-acid chain: D-alanine--D-alanine ligase (308 aa).

The ATP-grasp domain occupies 103–302 (KTVMATAGVP…FDELVQWMVE (200 aa)). 130–184 (MAPPYVIKPVADGSSVGVFMVTEAHEHPPQELFRDDWPHGEQLLVEKYVAGKELT) is an ATP binding site. Mg(2+) contacts are provided by Asp252, Glu269, and Asn271.

Belongs to the D-alanine--D-alanine ligase family. Requires Mg(2+) as cofactor. Mn(2+) is required as a cofactor.

It localises to the cytoplasm. It catalyses the reaction 2 D-alanine + ATP = D-alanyl-D-alanine + ADP + phosphate + H(+). The protein operates within cell wall biogenesis; peptidoglycan biosynthesis. Its function is as follows. Cell wall formation. The chain is D-alanine--D-alanine ligase from Rhodopseudomonas palustris (strain BisB18).